Consider the following 73-residue polypeptide: Protein kish (73 aa).

The signal sequence occupies residues 1 to 21; the sequence is MTAIFNFESLLFVILLTICTC. At 22–52 the chain is on the lumenal side; the sequence is TYLHRQFPALLEKRKEGVTMVFWKCARIGER. A helical transmembrane segment spans residues 53 to 73; the sequence is ASPYISLFCVFMALRFIFGSS.

The protein belongs to the KISH family.

The protein resides in the golgi apparatus membrane. It localises to the endoplasmic reticulum membrane. Functionally, involved in the early part of the secretory pathway. The sequence is that of Protein kish (ksh1) from Schizosaccharomyces pombe (strain 972 / ATCC 24843) (Fission yeast).